The primary structure comprises 349 residues: MIEFDNLTYLHGKPQGTGLLKANPEDFVVVEDLGFEPDGEGEHILVRILKNGCNTRFVADALAKFLKIHAREVSFAGQKDKHAVTEQWLCARVPGKEMPDLSAFQLEGCQVLEYARHKRKLRLGALKGNAFTLVLREVSNRDDVEQRLIDICVKGVPNYFGAQRFGIGGSNLQGALRWAQTNTPVRDRNKRSFWLSAARSALFNQIVAERLKKADVNQVVDGDALQLAGRGSWFVATTEELAELQRRVNDKVLMITAALPGSGEWGTQREALAFEQAAVAEETELQTLLVREKVEAARRAMLLYPQQLSWNWWDDVTVEIRFWLPAGSFATSVVRELINTTGDYAHIAE.

Residue phenylalanine 27 participates in substrate binding. Catalysis depends on aspartate 80, which acts as the Nucleophile. Asparagine 129 provides a ligand contact to substrate. In terms of domain architecture, TRUD spans 155-303 (GVPNYFGAQR…VEAARRAMLL (149 aa)). A substrate-binding site is contributed by phenylalanine 329.

The protein belongs to the pseudouridine synthase TruD family.

It catalyses the reaction uridine(13) in tRNA = pseudouridine(13) in tRNA. Functionally, responsible for synthesis of pseudouridine from uracil-13 in transfer RNAs. The chain is tRNA pseudouridine synthase D from Escherichia coli O6:K15:H31 (strain 536 / UPEC).